Consider the following 520-residue polypeptide: Pentatricopeptide repeat-containing protein At1g28690, mitochondrial (520 aa).

Residues 1–19 (MRIFRFTSISPRILPSNHY) constitute a mitochondrion transit peptide. PPR repeat units lie at residues 68–98 (DLNI…LPKP), 99–133 (TLSA…GEKA), 134–168 (DGYT…RIIK), 174–208 (DDVL…NVVC), 209–235 (CTSM…TKVK), 236–271 (DIVV…GFHP), 272–306 (NIST…GVYT), 307–337 (HIKM…MQEK), 338–372 (NVFS…RIEP), 373–403 (NYVT…MQRD), and 409–439 (KMEH…MPER). The interval 444–520 (IWAALLSSCN…TIGRSWTSED (77 aa)) is type E motif.

The protein belongs to the PPR family. PCMP-E subfamily.

It localises to the mitochondrion. This chain is Pentatricopeptide repeat-containing protein At1g28690, mitochondrial (PCMP-E34), found in Arabidopsis thaliana (Mouse-ear cress).